The following is a 218-amino-acid chain: Small ribosomal subunit protein uS3c (218 aa).

Residues 47-120 form the KH type-2 domain; it reads VRTHIKSSSN…KLHIAIEKVA (74 aa).

It belongs to the universal ribosomal protein uS3 family. In terms of assembly, part of the 30S ribosomal subunit.

Its subcellular location is the plastid. It is found in the chloroplast. This Picea abies (Norway spruce) protein is Small ribosomal subunit protein uS3c (rps3).